Here is a 395-residue protein sequence, read N- to C-terminus: ATP phosphoribosyltransferase regulatory subunit (395 aa).

It belongs to the class-II aminoacyl-tRNA synthetase family. HisZ subfamily. As to quaternary structure, heteromultimer composed of HisG and HisZ subunits.

Its subcellular location is the cytoplasm. It participates in amino-acid biosynthesis; L-histidine biosynthesis; L-histidine from 5-phospho-alpha-D-ribose 1-diphosphate: step 1/9. In terms of biological role, required for the first step of histidine biosynthesis. May allow the feedback regulation of ATP phosphoribosyltransferase activity by histidine. The protein is ATP phosphoribosyltransferase regulatory subunit of Azotobacter vinelandii (strain DJ / ATCC BAA-1303).